The following is an 877-amino-acid chain: ABC transporter A family member 1 (877 aa).

A run of 7 helical transmembrane segments spans residues 46-66, 268-288, 324-344, 347-367, 379-399, 420-440, and 479-499; these read YFST…LFLI, VWGG…LLYK, ILIS…FFLG, FFVL…VAFF, IGIG…FSGM, IILF…IGNV, and LLAL…IIPG. In terms of domain architecture, ABC transporter spans 552-788; that stretch reads LIICGLSKSY…YGEGYSVNIV (237 aa). Residue 591–598 participates in ATP binding; it reads GSNGCGKS.

This sequence belongs to the ABC transporter superfamily. ABCA family.

It localises to the membrane. This Dictyostelium discoideum (Social amoeba) protein is ABC transporter A family member 1 (abcA1).